Consider the following 127-residue polypeptide: Large ribosomal subunit protein bL17 (127 aa).

The protein belongs to the bacterial ribosomal protein bL17 family. Part of the 50S ribosomal subunit. Contacts protein L32.

The polypeptide is Large ribosomal subunit protein bL17 (Legionella pneumophila (strain Paris)).